The following is a 263-amino-acid chain: uncharacterized protein (263 aa).

31–38 (GPTGSGKT) contributes to the ATP binding site.

The protein belongs to the CbbQ/NirQ/NorQ/GpvN family.

This is an uncharacterized protein from Staphylococcus epidermidis (strain ATCC 12228 / FDA PCI 1200).